We begin with the raw amino-acid sequence, 407 residues long: Carbamoyl phosphate synthase small chain (407 aa).

Positions 1-203 are CPSase; it reads MSQNESGTIA…EPCGEYEGKE (203 aa). L-glutamine is bound by residues serine 61, glycine 255, and glycine 257. The region spanning 207–405 is the Glutamine amidotransferase type-1 domain; that stretch reads TVAAVDLGIK…CELMKNNSKE (199 aa). The active-site Nucleophile is cysteine 283. Phenylalanine 284, glutamine 287, asparagine 325, glycine 327, and phenylalanine 328 together coordinate L-glutamine. Catalysis depends on residues histidine 378 and glutamate 380.

Belongs to the CarA family. In terms of assembly, composed of two chains; the small (or glutamine) chain promotes the hydrolysis of glutamine to ammonia, which is used by the large (or ammonia) chain to synthesize carbamoyl phosphate. Tetramer of heterodimers (alpha,beta)4.

It catalyses the reaction hydrogencarbonate + L-glutamine + 2 ATP + H2O = carbamoyl phosphate + L-glutamate + 2 ADP + phosphate + 2 H(+). The enzyme catalyses L-glutamine + H2O = L-glutamate + NH4(+). It functions in the pathway amino-acid biosynthesis; L-arginine biosynthesis; carbamoyl phosphate from bicarbonate: step 1/1. Its pathway is pyrimidine metabolism; UMP biosynthesis via de novo pathway; (S)-dihydroorotate from bicarbonate: step 1/3. Functionally, small subunit of the glutamine-dependent carbamoyl phosphate synthetase (CPSase). CPSase catalyzes the formation of carbamoyl phosphate from the ammonia moiety of glutamine, carbonate, and phosphate donated by ATP, constituting the first step of 2 biosynthetic pathways, one leading to arginine and/or urea and the other to pyrimidine nucleotides. The small subunit (glutamine amidotransferase) binds and cleaves glutamine to supply the large subunit with the substrate ammonia. This Bifidobacterium longum (strain NCC 2705) protein is Carbamoyl phosphate synthase small chain.